The primary structure comprises 283 residues: ATP phosphoribosyltransferase (283 aa).

The protein belongs to the ATP phosphoribosyltransferase family. Long subfamily. It depends on Mg(2+) as a cofactor.

The protein resides in the cytoplasm. The enzyme catalyses 1-(5-phospho-beta-D-ribosyl)-ATP + diphosphate = 5-phospho-alpha-D-ribose 1-diphosphate + ATP. It participates in amino-acid biosynthesis; L-histidine biosynthesis; L-histidine from 5-phospho-alpha-D-ribose 1-diphosphate: step 1/9. Feedback inhibited by histidine. In terms of biological role, catalyzes the condensation of ATP and 5-phosphoribose 1-diphosphate to form N'-(5'-phosphoribosyl)-ATP (PR-ATP). Has a crucial role in the pathway because the rate of histidine biosynthesis seems to be controlled primarily by regulation of HisG enzymatic activity. The chain is ATP phosphoribosyltransferase from Bacteroides fragilis (strain ATCC 25285 / DSM 2151 / CCUG 4856 / JCM 11019 / LMG 10263 / NCTC 9343 / Onslow / VPI 2553 / EN-2).